The primary structure comprises 527 residues: MGSQKRLVQRVERKLEQTVGDAFARIFGGSIVPQEVEALLRREAADGIQSLQGNRLLAPNEYIITLGVHDFEKLGADPELKSTGFARDLADYIQEQGWQTYGDVVVRFEQSSNLHTGQFRARGTVNPDVETHPPVIDCARPQSNHAFGAEPGVAPMSDNSSYRGGQGQGRPDEYYDDRYARPQEDPRGGPDPQGGSDPRGGYPPETGGYPPQPGYPRPRHPDQGDYPEQIGYPDQGGYPEQRGYPEQRGYPDQRGYQDQGRGYPDQGQGGYPPPYEQRPPVSPGPAAGYGAPGYDQGYRQSGGYGPSPGGGQPGYGGYGEYGRGPARHEEGSYVPSGPPGPPEQRPAYPDQGGYDQGYQQGATTYGRQDYGGGADYTRYTESPRVPGYAPQGGGYAEPAGRDYDYGQSGAPDYGQPAPGGYSGYGQGGYGSAGTSVTLQLDDGSGRTYQLREGSNIIGRGQDAQFRLPDTGVSRRHLEIRWDGQVALLADLNSTNGTTVNNAPVQEWQLADGDVIRLGHSEIIVRMH.

Residue Thr116 is modified to Phosphothreonine. A disordered region spans residues 119–426 (FRARGTVNPD…APGGYSGYGQ (308 aa)). Basic and acidic residues predominate over residues 170 to 188 (RPDEYYDDRYARPQEDPRG). Low complexity-rich tracts occupy residues 199-209 (RGGYPPETGGY) and 256-266 (YQDQGRGYPDQ). Over residues 271–283 (YPPPYEQRPPVSP) the composition is skewed to pro residues. The span at 284 to 299 (GPAAGYGAPGYDQGYR) shows a compositional bias: low complexity. Positions 300 to 322 (QSGGYGPSPGGGQPGYGGYGEYG) are enriched in gly residues. A compositionally biased stretch (low complexity) spans 345–366 (RPAYPDQGGYDQGYQQGATTYG). The FHA domain occupies 455–504 (NIIGRGQDAQFRLPDTGVSRRHLEIRWDGQVALLADLNSTNGTTVNNAPV).

Interacts with (phosphorylated) MviN and (phosphorylated) PknB via the FHA domain. Binds to the PknB juxtamembrane domain with an affinity that is modulated by the degree and the pattern of phosphorylation of this juxtamembrane domain. Post-translationally, phosphorylated by PknB.

The protein resides in the cytoplasm. Functionally, regulates cell growth and peptidoglycan synthesis by binding to MviN. May inhibit the late stages of peptidoglycan synthesis. The polypeptide is FHA domain-containing protein FhaA (fhaA) (Mycobacterium tuberculosis (strain ATCC 25618 / H37Rv)).